Here is a 169-residue protein sequence, read N- to C-terminus: MEMLQGLLLWMLLSVGGVWASRGPLRPLCRPINATLAAEKEACPICITFTTSICAGYCRSMVRVMPAALPPIPQPVCTYRELRFGSIRLPGCPPGVDPMVSFPVALSCHCGPCRLKTTDCGGPRDHPLACAPQTSSSCKDPPSQPLTSTSTPTPGASRRSSHPLPINTS.

A signal peptide spans 1-20; it reads MEMLQGLLLWMLLSVGGVWA. 6 cysteine pairs are disulfide-bonded: C29/C77, C43/C92, C46/C130, C54/C108, C58/C110, and C113/C120. N33 is a glycosylation site (N-linked (GlcNAc...) asparagine). Residues 131–169 are disordered; it reads APQTSSSCKDPPSQPLTSTSTPTPGASRRSSHPLPINTS. A compositionally biased stretch (low complexity) spans 145–158; that stretch reads PLTSTSTPTPGASR.

It belongs to the glycoprotein hormones subunit beta family. In terms of assembly, heterodimer of a common alpha chain and a unique beta chain which confers biological specificity to thyrotropin, lutropin, follitropin and gonadotropin.

It localises to the secreted. In terms of biological role, promotes spermatogenesis and ovulation by stimulating the testes and ovaries to synthesize steroids. The protein is Lutropin/choriogonadotropin subunit beta (LHB) of Equus asinus (Donkey).